The sequence spans 124 residues: MATVNQLVRKPRVRKVIKSNVPALGKSPQKRGVCTRVYTTTPKKPNSALRKVCRVRLTNGFEVTAYIGGEGHNLQEHSVILIRGGRVKDLPGVRYHIVRGSLDCAGVKERKQGRSKYGVKKPKK.

The residue at position 89 (Asp89) is a 3-methylthioaspartic acid.

This sequence belongs to the universal ribosomal protein uS12 family. In terms of assembly, part of the 30S ribosomal subunit. Contacts proteins S8 and S17. May interact with IF1 in the 30S initiation complex.

Functionally, with S4 and S5 plays an important role in translational accuracy. Interacts with and stabilizes bases of the 16S rRNA that are involved in tRNA selection in the A site and with the mRNA backbone. Located at the interface of the 30S and 50S subunits, it traverses the body of the 30S subunit contacting proteins on the other side and probably holding the rRNA structure together. The combined cluster of proteins S8, S12 and S17 appears to hold together the shoulder and platform of the 30S subunit. The sequence is that of Small ribosomal subunit protein uS12 from Buchnera aphidicola subsp. Acyrthosiphon pisum (strain 5A).